The sequence spans 205 residues: Small ribosomal subunit protein uS4c (205 aa).

One can recognise an S4 RNA-binding domain in the interval 93 to 156 (MRLDNTVFRL…KSRNLVLNNL (64 aa)).

Belongs to the universal ribosomal protein uS4 family. Part of the 30S ribosomal subunit. Contacts protein S5. The interaction surface between S4 and S5 is involved in control of translational fidelity.

Its subcellular location is the plastid. It is found in the chloroplast. In terms of biological role, one of the primary rRNA binding proteins, it binds directly to 16S rRNA where it nucleates assembly of the body of the 30S subunit. Functionally, with S5 and S12 plays an important role in translational accuracy. In Mesostigma viride (Green alga), this protein is Small ribosomal subunit protein uS4c (rps4).